The sequence spans 719 residues: MQYSIEINKNTEIFDIDKVAKQAAGAVLMRQGKSVVLATVAREEKQVEEDFLPLTVQYIEKAYAAGKIPGGYVKRETKPSDAETLTARIIDRSLRPLFPKGYAYPTQIVVMVLSADPKVDLQVMSLNAASVALYLSDIPMKAPVCGVRIGKIDGNFILNPNNEELQNSTLDLYVAGVKDELLMIEMRALPDQKENEIFIEAPYADVLTQTTSQNMNELSEDEILEALNLAQKAILNGSNAYEEAFSKHKKNSQIELKNEIEHPEILAFIENNFQKQIKEAINQMAKSERASELNKIAKEILNLEITKDWSEESVLNTLAKVKRKLIREQILNEGKRADGRSLNEVRPISIETNILPNAHGSCLFTRGQTQALVVATLGGENDSQMIDLLTEKNPISERFMVNYNFPGFSVGEASPIKAPGRRELGHGNLAKRALYPSVDENYPYVIRLVSEILESNGSSSMATVCGGSLALKAAGVPSLKLVAGVAMGLIFEDNKYAVLTDIMGLEDHDGDMDFKVAGSKDGVTALQMDIKLGGIDQEILKQALYQAKEGRIHILNIMEEAAKEIIVNEEVLPKLELFSVDPSKIVDIIGQAGKTIKEIVEKFGVSIDLDREKGEVKIAGSQNEQIKAAKDYIINITSSQKGTKKGPKDKDISGFELGQEFQGIVKKIAPFGAFVELKNGVDGLLHSSKIKHLNLSENQSLKVKISEIKNGKISVDLCE.

Mg(2+)-binding residues include Asp-507 and Asp-513. One can recognise a KH domain in the interval 573-633 (PKLELFSVDP…EQIKAAKDYI (61 aa)). An S1 motif domain is found at 658–719 (GQEFQGIVKK…NGKISVDLCE (62 aa)).

It belongs to the polyribonucleotide nucleotidyltransferase family. The cofactor is Mg(2+).

It localises to the cytoplasm. It carries out the reaction RNA(n+1) + phosphate = RNA(n) + a ribonucleoside 5'-diphosphate. Involved in mRNA degradation. Catalyzes the phosphorolysis of single-stranded polyribonucleotides processively in the 3'- to 5'-direction. The protein is Polyribonucleotide nucleotidyltransferase of Campylobacter jejuni subsp. jejuni serotype O:2 (strain ATCC 700819 / NCTC 11168).